The chain runs to 338 residues: Glycerol-3-phosphate dehydrogenase [NAD(P)+] (338 aa).

Positions 13, 14, and 108 each coordinate NADPH. Sn-glycerol 3-phosphate is bound by residues lysine 108, glycine 139, and serine 141. Alanine 143 lines the NADPH pocket. The sn-glycerol 3-phosphate site is built by lysine 194, aspartate 247, serine 257, arginine 258, and asparagine 259. Lysine 194 functions as the Proton acceptor in the catalytic mechanism. Arginine 258 lines the NADPH pocket. Positions 282 and 284 each coordinate NADPH.

This sequence belongs to the NAD-dependent glycerol-3-phosphate dehydrogenase family.

It is found in the cytoplasm. The catalysed reaction is sn-glycerol 3-phosphate + NAD(+) = dihydroxyacetone phosphate + NADH + H(+). It catalyses the reaction sn-glycerol 3-phosphate + NADP(+) = dihydroxyacetone phosphate + NADPH + H(+). It functions in the pathway membrane lipid metabolism; glycerophospholipid metabolism. Functionally, catalyzes the reduction of the glycolytic intermediate dihydroxyacetone phosphate (DHAP) to sn-glycerol 3-phosphate (G3P), the key precursor for phospholipid synthesis. The protein is Glycerol-3-phosphate dehydrogenase [NAD(P)+] of Streptococcus gordonii (strain Challis / ATCC 35105 / BCRC 15272 / CH1 / DL1 / V288).